Here is a 208-residue protein sequence, read N- to C-terminus: MRVVLASNNAKKLVELQRLFAALPIELVTQGSLGIAEAEEPHHTFVENALAKARHAAAEAGCAAIADDSGLCVDALGGAPGVVSAHYATVVLPAADREAQRAVQDAANNALLLDRLQGQADRRASFVSTLVALRHADDPQPLIAFGRWQGEILDAPRGEAGFGYDPLMFIPALGRSVAQMPAEEKSRCSHRALAARDMLALMRAHWLA.

7-12 contributes to the substrate binding site; the sequence is SNNAKK. Positions 39 and 68 each coordinate Mg(2+). Asp68 functions as the Proton acceptor in the catalytic mechanism. Substrate is bound by residues Ser69, 162-165, Lys185, and 190-191; these read FGYD and HR.

Belongs to the HAM1 NTPase family. In terms of assembly, homodimer. The cofactor is Mg(2+).

The catalysed reaction is XTP + H2O = XMP + diphosphate + H(+). The enzyme catalyses dITP + H2O = dIMP + diphosphate + H(+). It catalyses the reaction ITP + H2O = IMP + diphosphate + H(+). Its function is as follows. Pyrophosphatase that catalyzes the hydrolysis of nucleoside triphosphates to their monophosphate derivatives, with a high preference for the non-canonical purine nucleotides XTP (xanthosine triphosphate), dITP (deoxyinosine triphosphate) and ITP. Seems to function as a house-cleaning enzyme that removes non-canonical purine nucleotides from the nucleotide pool, thus preventing their incorporation into DNA/RNA and avoiding chromosomal lesions. This Methylibium petroleiphilum (strain ATCC BAA-1232 / LMG 22953 / PM1) protein is dITP/XTP pyrophosphatase.